The following is a 245-amino-acid chain: Uridylate kinase (245 aa).

An ATP-binding site is contributed by 20-23 (KLSG). Glycine 60 lines the UMP pocket. ATP-binding residues include glycine 61 and arginine 65. UMP is bound by residues aspartate 80 and 141–148 (AGLPYFST). The ATP site is built by tyrosine 175 and aspartate 178.

This sequence belongs to the UMP kinase family. In terms of assembly, homohexamer.

It is found in the cytoplasm. The catalysed reaction is UMP + ATP = UDP + ADP. It functions in the pathway pyrimidine metabolism; CTP biosynthesis via de novo pathway; UDP from UMP (UMPK route): step 1/1. Inhibited by UTP. Its function is as follows. Catalyzes the reversible phosphorylation of UMP to UDP. This is Uridylate kinase from Paenarthrobacter aurescens (strain TC1).